A 302-amino-acid chain; its full sequence is Thioredoxin-like protein CDSP32, chloroplastic (302 aa).

A chloroplast-targeting transit peptide spans 1–56; the sequence is MATVANFLAKPISTVVPRPSSAVASTSSFVFFNHKTNPLFRRKNLPKRLFSAVKIK. The 136-residue stretch at 163–298 folds into the Thioredoxin domain; that stretch reads HEEEGIEPDQ…IGEILRYSGV (136 aa). Residues cysteine 219 and cysteine 222 each act as nucleophile in the active site. Cysteine 219 and cysteine 222 are oxidised to a cystine.

The protein belongs to the thioredoxin family. Interacts with the plastidial peroxiredoxin BAS1.

It is found in the plastid. It localises to the chloroplast stroma. Functionally, probable thiol-disulfide oxidoreductase involved in resistance to oxidative stress. May participate in the reduction of alkyl hydroperoxides derived from oxidative stress by acting as a physiological electron donor to the BAS1 peroxiredoxin. May regenerate methionine sulfoxide reductase B1 (MSRB1) activity through sulfenic acid reduction. This chain is Thioredoxin-like protein CDSP32, chloroplastic (CDSP32), found in Arabidopsis thaliana (Mouse-ear cress).